Consider the following 644-residue polypeptide: MQTVRMTTAQALVKFLNQQYVEFDGKQQKFIKGIFTIFGHGNVVGLGQALEEDAGELEVYQGRNEQGMANAAMAFAKQKHRKQIMACTSSVGPGSANMITSAATASANNIPVLLLPGDVFATRQSDPVLQQIEQTHDLSISTNDAFRAVSKYWDRINRPEQLMTAMIQAMRVLTNPADTGAVTICLPQDVQGEAWDFPDYFFQKRVHRIERRLPTKASLADAVEMIKRKKKPVMICGGGVRYAEAAEELKQFAETFHIPFGETQAGKSAIESSHPYNLGGIGVTGNIAANTIAKEADLVIGIGTRFTDFTTASKQLFQNEEVEFLNINISEFHANKLDALKVIADAKEALLVLIDELQVMDYRSSYTVEIADAKEAWETELSRLHNIRFTGQDFTPEVEGHFDGNLNEYVDALGSQLTQTAVIGQINTLLDEDAIIVGAAGSLPGDLQRMWASRKPNTYHMEYGYSCMGYEVAGALGAKLAEPSKEVYAMVGDGSYQMLHSELVTSLQENKKINVLLFDNSGFGCINNLQMGNGMGSFGTEFRYRNQETRKLDGTIMKIDFAASAAGYGVKTYHVTSLEQLQEALIDAKKQTVSTLIDIKVLPKTMTNGYESWWHVGIAEVSKSQRVQAAYESKVSNLQQARSY.

A thiamine diphosphate-binding site is contributed by E65. The interval 442 to 522 is thiamine pyrophosphate binding; the sequence is SLPGDLQRMW…INVLLFDNSG (81 aa). Residues D493 and N520 each contribute to the Mg(2+) site.

The protein belongs to the TPP enzyme family. Mg(2+) is required as a cofactor. Requires thiamine diphosphate as cofactor.

It catalyses the reaction 3D-3,5/4-trihydroxycyclohexane-1,2-dione + H2O = 5-deoxy-D-glucuronate + H(+). Its pathway is polyol metabolism; myo-inositol degradation into acetyl-CoA; acetyl-CoA from myo-inositol: step 3/7. Its function is as follows. Involved in the cleavage of the C1-C2 bond of 3D-(3,5/4)-trihydroxycyclohexane-1,2-dione (THcHDO) to yield 5-deoxy-glucuronate (5DG). This chain is 3D-(3,5/4)-trihydroxycyclohexane-1,2-dione hydrolase, found in Bacillus thuringiensis (strain Al Hakam).